Here is a 566-residue protein sequence, read N- to C-terminus: DNA ligase B (566 aa).

The N6-AMP-lysine intermediate role is filled by Lys125.

It belongs to the NAD-dependent DNA ligase family. LigB subfamily.

The catalysed reaction is NAD(+) + (deoxyribonucleotide)n-3'-hydroxyl + 5'-phospho-(deoxyribonucleotide)m = (deoxyribonucleotide)n+m + AMP + beta-nicotinamide D-nucleotide.. Functionally, catalyzes the formation of phosphodiester linkages between 5'-phosphoryl and 3'-hydroxyl groups in double-stranded DNA using NAD as a coenzyme and as the energy source for the reaction. This Pseudomonas putida (strain ATCC 47054 / DSM 6125 / CFBP 8728 / NCIMB 11950 / KT2440) protein is DNA ligase B.